The sequence spans 239 residues: Ribose-5-phosphate isomerase A (239 aa).

Substrate is bound by residues 40 to 43 (SGST), 96 to 99 (DGAD), and 110 to 113 (KGGG). Glutamate 119 acts as the Proton acceptor in catalysis. A substrate-binding site is contributed by lysine 137.

Belongs to the ribose 5-phosphate isomerase family. In terms of assembly, homodimer.

The enzyme catalyses aldehydo-D-ribose 5-phosphate = D-ribulose 5-phosphate. The protein operates within carbohydrate degradation; pentose phosphate pathway; D-ribose 5-phosphate from D-ribulose 5-phosphate (non-oxidative stage): step 1/1. Its function is as follows. Catalyzes the reversible conversion of ribose-5-phosphate to ribulose 5-phosphate. The chain is Ribose-5-phosphate isomerase A from Methanococcus maripaludis (strain C5 / ATCC BAA-1333).